A 246-amino-acid chain; its full sequence is DNA repair protein RecO (246 aa).

It belongs to the RecO family.

In terms of biological role, involved in DNA repair and RecF pathway recombination. In Nitrosococcus oceani (strain ATCC 19707 / BCRC 17464 / JCM 30415 / NCIMB 11848 / C-107), this protein is DNA repair protein RecO.